Reading from the N-terminus, the 247-residue chain is 2,3-bisphosphoglycerate-dependent phosphoglycerate mutase (247 aa).

Residues 8–15 (RHGESVWN), 21–22 (TG), Arg60, 87–90 (ERHY), Lys98, 114–115 (RR), and 183–184 (GN) contribute to the substrate site. The Tele-phosphohistidine intermediate role is filled by His9. Catalysis depends on Glu87, which acts as the Proton donor/acceptor.

The protein belongs to the phosphoglycerate mutase family. BPG-dependent PGAM subfamily. As to quaternary structure, homodimer.

The enzyme catalyses (2R)-2-phosphoglycerate = (2R)-3-phosphoglycerate. Its pathway is carbohydrate degradation; glycolysis; pyruvate from D-glyceraldehyde 3-phosphate: step 3/5. Its function is as follows. Catalyzes the interconversion of 2-phosphoglycerate and 3-phosphoglycerate. This Geobacter metallireducens (strain ATCC 53774 / DSM 7210 / GS-15) protein is 2,3-bisphosphoglycerate-dependent phosphoglycerate mutase.